Consider the following 628-residue polypeptide: RING finger protein 112 (628 aa).

Residues 57-98 form an RING-type zinc finger; sequence CSICLERPREPISLDCGHDFCPRCFSTHRVPGCGPPCCPECR. The interaction with ZBTB16 stretch occupies residues 132–628; that stretch reads AVRAEPLLLV…GDREPLLQEE (497 aa). The GB1/RHD3-type G domain occupies 167-409; the sequence is DTPVCLLAVL…RCPGYWSEGR (243 aa). 318–319 is a binding site for GTP; the sequence is RD. The next 2 helical transmembrane spans lie at 544–564 and 577–597; these read LAAV…GVVG and GMVA…GGGV.

This sequence belongs to the TRAFAC class dynamin-like GTPase superfamily. GB1/RHD3 GTPase family. GB1 subfamily. As to quaternary structure, self-associates. Interacts with SP1 in an oxidative stress-regulated manner. Interacts with SIGMAR1 in an oxidative stress-regulated manner. Interacts with ZBTB16 (via C2H2-type zinc finger domains 1 and 2). Auto-ubiquitinated.

Its subcellular location is the membrane. The protein resides in the cytoplasm. The protein localises to the nucleus. It is found in the nuclear body. It localises to the nucleoplasm. Its subcellular location is the endosome. The protein resides in the cytoplasmic vesicle. The protein localises to the secretory vesicle. It is found in the synaptic vesicle. It localises to the postsynaptic density. Its subcellular location is the perikaryon. The protein resides in the cell projection. The protein localises to the neuron projection. It catalyses the reaction S-ubiquitinyl-[E2 ubiquitin-conjugating enzyme]-L-cysteine + [acceptor protein]-L-lysine = [E2 ubiquitin-conjugating enzyme]-L-cysteine + N(6)-ubiquitinyl-[acceptor protein]-L-lysine.. It functions in the pathway protein modification; protein ubiquitination. Functionally, E3 ubiquitin-protein ligase that plays an important role in neuronal differentiation, including neurogenesis and gliogenesis, during brain development. During embryonic development initiates neuronal differentiation by inducing cell cycle arrest at the G0/G1 phase through up-regulation of cell-cycle regulatory proteins. Plays a role not only in the fetal period during the development of the nervous system, but also in the adult brain, where it is involved in the maintenance of neural functions and protection of the nervous tissue cells from oxidative stress-induced damage. Exhibits GTPase and E3 ubiquitin-protein ligase activities. Regulates dendritic spine density and synaptic neurotransmission; its ability to hydrolyze GTP is involved in the maintenance of dendritic spine density. The protein is RING finger protein 112 (RNF112) of Bos taurus (Bovine).